The chain runs to 855 residues: MVVMARLSRPERPDLVFEEEDLPYEEEIMRNQFSVKCWLRYIEFKQGAPKPRLNQLYERALKLLPCSYKLWYRYLKARRAQVKHRCVTDPAYEDVNNCHERAFVFMHKMPRLWLDYCQFLMDQGRVTHTRRTFDRALRALPITQHSRIWPLYLRFLRSHPLPETAVRGYRRFLKLSPESAEEYIEYLKSSDRLDEAAQRLATVVNDERFVSKAGKSNYQLWHELCDLISQNPDKVQSLNVDAIIRGGLTRFTDQLGKLWCSLADYYIRSGHFEKARDVYEEAIRTVMTVRDFTQVFDSYAQFEESMIAAKMETASELGREEEDDVDLELRLARFEQLISRRPLLLNSVLLRQNPHHVHEWHKRVALHQGRPREIINTYTEAVQTVDPFKATGKPHTLWVAFAKFYEDNGQLDDARVILEKATKVNFKQVDDLASVWCQCGELELRHENYDEALRLLRKATALPARRAEYFDGSEPVQNRVYKSLKVWSMLADLEESLGTFQSTKAVYDRILDLRIATPQIVINYAMFLEEHKYFEESFKAYERGISLFKWPNVSDIWSTYLTKFIARYGGRKLERARDLFEQALDGCPPKYAKTLYLLYAQLEEEWGLARHAMAVYERATRAVEPAQQYDMFNIYIKRAAEIYGVTHTRGIYQKAIEVLSDEHAREMCLRFADMECKLGEIDRARAIYSFCSQICDPRTTGAFWQTWKDFEVRHGNEDTIKEMLRIRRSVQATYNTQVNFMASQMLKVSGSATGTVSDLAPGQSGMDDMKLLEQRAEQLAAEAERDQPLRAQSKILFVRSDASREELAELAQQVNPEEIQLGEDEDEDEMDLEPNEVRLEQQSVPAAVFGSLKED.

9 HAT repeats span residues 15–47 (LVFE…FKQG), 48–80 (APKP…ARRA), 90–122 (PAYE…FLMD), 124–158 (GRVT…FLRS), 160–192 (PLPE…SSDR), 198–230 (QRLA…LISQ), 235–268 (VQSL…YYIR), 270–305 (GHFE…FEES), and 369–407 (GRPR…FYED). Residue Lys420 is modified to N6-acetyllysine. HAT repeat units lie at residues 498 to 530 (GTFQ…FLEE), 532 to 566 (KYFE…KFIA), 571 to 605 (RKLE…LEEE), 643 to 677 (YGVT…MECK), and 679 to 713 (GEID…FEVR). Positions 810 to 855 (LAQQVNPEEIQLGEDEDEDEMDLEPNEVRLEQQSVPAAVFGSLKED) are disordered. Residues 820-834 (QLGEDEDEDEMDLEP) are compositionally biased toward acidic residues. Ser851 carries the post-translational modification Phosphoserine.

This sequence belongs to the crooked-neck family. As to quaternary structure, associates with RNA polymerase II, the TCR-specific proteins CKN1/CSA and ERCC6/CSB, and XPA. Identified in the spliceosome C complex. Component of the XAB2 complex, a multimeric protein complex composed of XAB2, PRPF19, AQR, ZNF830, ISY1, and PPIE. Identified in a pentameric intron-binding (IB) complex composed of AQR, XAB2, ISY1, ZNF830 and PPIE that is incorporated into the spliceosome as a preassembled complex. The IB complex does not contain PRPF19.

Its subcellular location is the nucleus. Involved in pre-mRNA splicing as component of the spliceosome. Involved in transcription-coupled repair (TCR), transcription and pre-mRNA splicing. The protein is Pre-mRNA-splicing factor SYF1 (XAB2) of Homo sapiens (Human).